Reading from the N-terminus, the 800-residue chain is Endoglucanase (800 aa).

A signal peptide spans 1-30; it reads MMLRKKTKQLISSILILVLLLSLFPTALAA. E190 serves as the catalytic Proton donor. The Nucleophile role is filled by E305. Residues 761 to 800 are disordered; that stretch reads AATTEPVEPEPVDPGEETPPVDEKEAKTEQKEAEKEEKEE. Over residues 767 to 780 the composition is skewed to acidic residues; the sequence is VEPEPVDPGEETPP. Positions 781-800 are enriched in basic and acidic residues; sequence VDEKEAKTEQKEAEKEEKEE.

Belongs to the glycosyl hydrolase 5 (cellulase A) family.

It catalyses the reaction Endohydrolysis of (1-&gt;4)-beta-D-glucosidic linkages in cellulose, lichenin and cereal beta-D-glucans.. The protein is Endoglucanase of Halalkalibacter akibai (strain ATCC 43226 / DSM 21942 / CIP 109018 / JCM 9157 / 1139) (Bacillus akibai).